We begin with the raw amino-acid sequence, 3175 residues long: Replicase polyprotein 1ab (3175 aa).

The C4-type; atypical zinc-finger motif lies at 25–44 (CEHGAGLCCEVDGSTLCAEC). A Peptidase C31 domain is found at 66 to 156 (SPVPVGHKFL…PAANSLIVTT (91 aa)). In terms of domain architecture, Peptidase C32 spans 157-260 (DQEQDGFCWL…WSCLPAGNYG (104 aa)). Residues cysteine 164 and histidine 230 each act as for Nsp1 papain-like cysteine proteinase activity in the active site. The OTU-like stretch occupies residues 261 to 339 (GYNPPGDGAC…KQHWRVKRAK (79 aa)). The 100-residue stretch at 261–360 (GYNPPGDGAC…RGICNCQRMS (100 aa)) folds into the Peptidase C33 domain. Catalysis depends on cysteine 270, which acts as the For Nsp2 cysteine proteinase activity. Position 319 (cysteine 319) interacts with Zn(2+). The active-site For Nsp2 cysteine proteinase activity is the histidine 332. Zn(2+) is bound by residues cysteine 349, cysteine 354, and cysteine 356. The disordered stretch occupies residues 386 to 451 (VVTPEGQPRP…TRLQGASTQE (66 aa)). Transmembrane regions (helical) follow at residues 530–550 (AVIA…SFAI), 551–571 (GLIP…SSAN), 625–645 (FDAA…ILYL), 829–849 (LIGG…STFT), 903–923 (YWIA…RLAI), 935–955 (LVLL…SLAG), and 977–997 (LVTM…LMGL). The HD1 stretch occupies residues 530–645 (AVIACLLPIW…DLCSFAILYL (116 aa)). An HD2 region spans residues 829–997 (LIGGWIYGIC…ALAVYSLMGL (169 aa)). The 204-residue stretch at 1065–1268 (GLFRSPKARG…MLIDGLSNRE (204 aa)) folds into the Peptidase S32 domain. Catalysis depends on charge relay system; for 3C-like serine proteinase activity residues histidine 1103, aspartate 1129, and serine 1184. A run of 4 helical transmembrane segments spans residues 1291–1311 (AYLP…KSVG), 1333–1353 (CLFH…WFYI), 1355–1375 (AAGT…MLFV), and 1385–1405 (GWAI…AALG). Positions 1291–1405 (AYLPYVLGFF…SITMLAAALG (115 aa)) are HD3. N-linked (GlcNAc...) asparagine; by host glycosylation is present at asparagine 1501. The disordered stretch occupies residues 1577–1614 (NDTPVKPMPSRRRRKGLPKGAQLEWDRHQEEKRNAGDD). Positions 1600–1612 (EWDRHQEEKRNAG) are enriched in basic and acidic residues. The region spanning 1716-1883 (LANPVEAVNQ…DKVAAAVSGD (168 aa)) is the NiRAN domain. The RdRp catalytic domain maps to 2116 to 2251 (KYCLETDLES…TTPNQHYAAS (136 aa)). The region spanning 2371–2438 (SAVCTVCGAA…SPKQMVPKVP (68 aa)) is the AV ZBD domain. Zn(2+) contacts are provided by cysteine 2374, cysteine 2377, cysteine 2387, cysteine 2392, cysteine 2395, histidine 2399, histidine 2402, cysteine 2403, cysteine 2412, histidine 2414, cysteine 2423, and cysteine 2426. In terms of domain architecture, (+)RNA virus helicase ATP-binding spans 2496–2661 (PGSHIAVPLQ…LRHFVSLEPL (166 aa)). 2528-2535 (GPPGSGKT) lines the ATP pocket. The (+)RNA virus helicase C-terminal domain occupies 2662 to 2793 (RVCHRFGAAV…PPTACHLGQE (132 aa)). The region spanning 2840-2930 (KISCLPRVAQ…LTEWVDGKAR (91 aa)) is the AV-Nsp11N/CoV-Nsp15M domain. The region spanning 2932–3054 (LPDSLFSSGR…MVWRNATFYV (123 aa)) is the NendoU domain. Catalysis depends on residues histidine 2963, histidine 2978, and lysine 3007.

It belongs to the arteriviridae polyprotein family. Nsp1 interacts with cellular transcription cofactor SND1/p100. In terms of processing, specific enzymatic cleavages in vivo by its own proteases yield mature proteins. There are two alternative pathways for processing. Either nsp4-5 is cleaved, which represents the major pathway or the nsp5-6 and nsp6-7 are processed, which represents the minor pathway. The major pathway occurs when nsp2 acts as a cofactor for nsp4.

It is found in the host nucleus. The protein localises to the host cytoplasm. It localises to the host membrane. The protein resides in the host perinuclear region. It carries out the reaction RNA(n) + a ribonucleoside 5'-triphosphate = RNA(n+1) + diphosphate. The catalysed reaction is ATP + H2O = ADP + phosphate + H(+). The enzyme catalyses Thiol-dependent hydrolysis of ester, thioester, amide, peptide and isopeptide bonds formed by the C-terminal Gly of ubiquitin (a 76-residue protein attached to proteins as an intracellular targeting signal).. It catalyses the reaction uridylyl-uridylyl-ribonucleotide-RNA = a 3'-end uridylyl-2',3'-cyclophospho-uridine-RNA + a 5'-end dephospho-ribonucleoside-RNA. The replicase polyprotein 1ab is a multifunctional protein: it contains the activities necessary for the transcription of negative stranded RNA, leader RNA, subgenomic mRNAs and progeny virion RNA as well as proteinases responsible for the cleavage of the polyprotein into functional products. Functionally, nsp1 is essential for viral subgenomic mRNA synthesis. Its function is as follows. Nsp2 cysteine proteinase which cleaves the nsp2/nsp3 site in the polyprotein. Also displays deubiquitinating and deISGylase activities. The deubiquitinating activity cleaves both ubiquitinated and ISGylated products and may therefore regulate ubiquitin and ISG15 dependent host innate immunity. In terms of biological role, the 3C-like serine proteinase chain is responsible for the majority of cleavages as it cleaves the C-terminus of the polyprotein. The helicase chain, which contains a zinc finger structure, displays RNA and DNA duplex-unwinding activities with 5' to 3' polarity. Functionally, plays a role in viral transcription/replication and prevents the simultaneous activation of host cell dsRNA sensors, such as MDA5/IFIH1, OAS, and PKR. Acts by degrading the 5'-polyuridines generated during replication of the poly(A) region of viral genomic and subgenomic RNAs. Catalyzes a two-step reaction in which a 2'3'-cyclic phosphate (2'3'-cP) is first generated by 2'-O transesterification, which is then hydrolyzed to a 3'-phosphate (3'-P). If not degraded, poly(U) RNA would hybridize with poly(A) RNA tails and activate host dsRNA sensors. This is Replicase polyprotein 1ab (rep) from Equidae (horses).